A 257-amino-acid polypeptide reads, in one-letter code: Putative phosphatase YkrA (257 aa).

The Nucleophile role is filled by Asp-9. Residue Asp-9 participates in Mg(2+) binding. Ile-10 is a binding site for phosphate. Asp-11 contributes to the Mg(2+) binding site. Phosphate contacts are provided by residues 43-44 and Lys-183; that span reads SG. Asp-206 is a binding site for Mg(2+). Asn-209 contributes to the phosphate binding site.

The protein belongs to the HAD-like hydrolase superfamily. Cof family. Mg(2+) serves as cofactor.

In Bacillus subtilis (strain 168), this protein is Putative phosphatase YkrA (ykrA).